The chain runs to 450 residues: NADP-specific glutamate dehydrogenase (450 aa).

Residue K114 is part of the active site.

The protein belongs to the Glu/Leu/Phe/Val dehydrogenases family. As to quaternary structure, homohexamer.

It catalyses the reaction L-glutamate + NADP(+) + H2O = 2-oxoglutarate + NH4(+) + NADPH + H(+). This Botryotinia fuckeliana (Noble rot fungus) protein is NADP-specific glutamate dehydrogenase (gdhA).